We begin with the raw amino-acid sequence, 128 residues long: Large ribosomal subunit protein bL12 (128 aa).

Belongs to the bacterial ribosomal protein bL12 family. As to quaternary structure, homodimer. Part of the ribosomal stalk of the 50S ribosomal subunit. Forms a multimeric L10(L12)X complex, where L10 forms an elongated spine to which 2 to 4 L12 dimers bind in a sequential fashion. Binds GTP-bound translation factors.

Its function is as follows. Forms part of the ribosomal stalk which helps the ribosome interact with GTP-bound translation factors. Is thus essential for accurate translation. This is Large ribosomal subunit protein bL12 from Picosynechococcus sp. (strain ATCC 27264 / PCC 7002 / PR-6) (Agmenellum quadruplicatum).